Reading from the N-terminus, the 276-residue chain is Undecaprenyl-diphosphatase (276 aa).

5 consecutive transmembrane segments (helical) span residues 84–104 (YRLG…GLFF), 115–135 (LWVV…AEYV), 188–208 (FGFL…LPDA), 222–242 (QLLV…AWLL), and 250–270 (MYWF…LLAT).

Belongs to the UppP family.

The protein localises to the cell membrane. It carries out the reaction di-trans,octa-cis-undecaprenyl diphosphate + H2O = di-trans,octa-cis-undecaprenyl phosphate + phosphate + H(+). Catalyzes the dephosphorylation of undecaprenyl diphosphate (UPP). Confers resistance to bacitracin. The sequence is that of Undecaprenyl-diphosphatase from Mycobacterium tuberculosis (strain ATCC 25177 / H37Ra).